Here is a 360-residue protein sequence, read N- to C-terminus: Protein DVR-1 (360 aa).

The signal sequence occupies residues 1–16; the sequence is MVWLRLWAFLHILAIV. A propeptide spanning residues 17-246 is cleaved from the precursor; it reads TLDPELKRRE…LRCKRPRRKR (230 aa). N-linked (GlcNAc...) asparagine glycosylation is found at Asn113, Asn181, and Asn301. 3 disulfides stabilise this stretch: Cys259/Cys325, Cys288/Cys357, and Cys292/Cys359.

This sequence belongs to the TGF-beta family. In terms of assembly, homodimer. As to expression, vegetal region of the egg.

The protein localises to the secreted. Functionally, serves to facilitate the differentiation of either mesoderm or endoderm either as a cofactor in an instructive signal or by providing permissive environment. The protein is Protein DVR-1 (dvr1) of Xenopus laevis (African clawed frog).